Here is a 456-residue protein sequence, read N- to C-terminus: MLNSAMSVVILAAGKGTRMYSDLPKVLHKLAGKPMVQHVIDAAMTTGAQHVHLVYGHGGDLLKHELTDPALNWVLQAEQLGTGHAMQQAAPHFADDEDILMLYGDVPLISSQTLVHLREAKPQGGIGLLTVKLDDPAGYGRIVREKGAVVGIVEHKDASEAQRQINEINTGILIANGKDLKRWLSQLNNNNAQGEFYITDIIAMASAEGQRVEAVHPERLSEVEGVNNRLQLSALERIYQREQADKLLLAGVMLLDPARFDLRGELTHGRDVVMDVNVVVEGNVKLGNRVKIGAGCVIKNCIIGDDSEISPYSVLEDSVLEAQCTIGPFARLRPGSELAEGAHVGNFVELKKARLGKGSKAGHLSYLGDADIGSGVNIGAGTITCNYDGANKHKTVIGDDVFVGSDTQLVAPVNVASGATIGAGTTVTRDVAENELVISRVKQRHISGWQRPVKKK.

A pyrophosphorylase region spans residues 1-229; the sequence is MLNSAMSVVI…LSEVEGVNNR (229 aa). UDP-N-acetyl-alpha-D-glucosamine-binding positions include 11 to 14, Lys-25, Gln-76, 81 to 82, 103 to 105, Gly-140, Glu-154, Asn-169, and Asn-227; these read LAAG, GT, and YGD. Asp-105 lines the Mg(2+) pocket. Residue Asn-227 participates in Mg(2+) binding. The interval 230–250 is linker; the sequence is LQLSALERIYQREQADKLLLA. The segment at 251–456 is N-acetyltransferase; it reads GVMLLDPARF…SGWQRPVKKK (206 aa). UDP-N-acetyl-alpha-D-glucosamine contacts are provided by Arg-333 and Lys-351. The active-site Proton acceptor is the His-363. Residues Tyr-366 and Asn-377 each coordinate UDP-N-acetyl-alpha-D-glucosamine. Acetyl-CoA contacts are provided by residues Ala-380, 386–387, Ser-405, Ala-423, and Arg-440; that span reads NY.

In the N-terminal section; belongs to the N-acetylglucosamine-1-phosphate uridyltransferase family. The protein in the C-terminal section; belongs to the transferase hexapeptide repeat family. Homotrimer. It depends on Mg(2+) as a cofactor.

The protein resides in the cytoplasm. The catalysed reaction is alpha-D-glucosamine 1-phosphate + acetyl-CoA = N-acetyl-alpha-D-glucosamine 1-phosphate + CoA + H(+). It carries out the reaction N-acetyl-alpha-D-glucosamine 1-phosphate + UTP + H(+) = UDP-N-acetyl-alpha-D-glucosamine + diphosphate. It participates in nucleotide-sugar biosynthesis; UDP-N-acetyl-alpha-D-glucosamine biosynthesis; N-acetyl-alpha-D-glucosamine 1-phosphate from alpha-D-glucosamine 6-phosphate (route II): step 2/2. The protein operates within nucleotide-sugar biosynthesis; UDP-N-acetyl-alpha-D-glucosamine biosynthesis; UDP-N-acetyl-alpha-D-glucosamine from N-acetyl-alpha-D-glucosamine 1-phosphate: step 1/1. Its pathway is bacterial outer membrane biogenesis; LPS lipid A biosynthesis. In terms of biological role, catalyzes the last two sequential reactions in the de novo biosynthetic pathway for UDP-N-acetylglucosamine (UDP-GlcNAc). The C-terminal domain catalyzes the transfer of acetyl group from acetyl coenzyme A to glucosamine-1-phosphate (GlcN-1-P) to produce N-acetylglucosamine-1-phosphate (GlcNAc-1-P), which is converted into UDP-GlcNAc by the transfer of uridine 5-monophosphate (from uridine 5-triphosphate), a reaction catalyzed by the N-terminal domain. This is Bifunctional protein GlmU from Pectobacterium atrosepticum (strain SCRI 1043 / ATCC BAA-672) (Erwinia carotovora subsp. atroseptica).